The chain runs to 274 residues: NH(3)-dependent NAD(+) synthetase (274 aa).

Residue 46-53 (GISGGQDS) participates in ATP binding. Asp52 serves as a coordination point for Mg(2+). Arg140 serves as a coordination point for deamido-NAD(+). Thr160 provides a ligand contact to ATP. Glu165 lines the Mg(2+) pocket. Positions 173 and 180 each coordinate deamido-NAD(+). The ATP site is built by Lys189 and Thr211. 260 to 261 (HK) is a deamido-NAD(+) binding site.

Belongs to the NAD synthetase family. As to quaternary structure, homodimer.

It carries out the reaction deamido-NAD(+) + NH4(+) + ATP = AMP + diphosphate + NAD(+) + H(+). It participates in cofactor biosynthesis; NAD(+) biosynthesis; NAD(+) from deamido-NAD(+) (ammonia route): step 1/1. Its function is as follows. Catalyzes the ATP-dependent amidation of deamido-NAD to form NAD. Uses ammonia as a nitrogen source. The protein is NH(3)-dependent NAD(+) synthetase of Streptococcus pneumoniae serotype 19F (strain G54).